The primary structure comprises 414 residues: GPI mannosyltransferase 1 (414 aa).

The next 10 membrane-spanning stretches (helical) occupy residues 6-26 (ISHIIVLSLLIRIGFFLFGLY), 87-107 (YIFMISDLITGIIILKLLSGI), 119-139 (IIMLSSIWLLNPMVITISTRG), 149-171 (IMLSLYYLINKKSIIASGFWLGL), 183-203 (LPSIMLYLSTSGTPFIDVPIV), 213-233 (FLITTLITIGAFNGIMYSIYG), 282-302 (MEKFVMLPQLSISALILPLLF), 316-336 (FAFVTFNKVITSQYFIWFLIF), 356-376 (IVALLLWIVSQGSWLYFAYQL), and 387-407 (GLLFSSFFFYISNCWILSVFI).

The protein belongs to the PIGM family.

It is found in the endoplasmic reticulum membrane. The protein operates within glycolipid biosynthesis; glycosylphosphatidylinositol-anchor biosynthesis. In terms of biological role, mannosyltransferase involved in glycosylphosphatidylinositol-anchor biosynthesis. Transfers the first alpha-1,4-mannose to GlcN-acyl-PI during GPI precursor assembly. Required for cell wall integrity. The polypeptide is GPI mannosyltransferase 1 (GPI14) (Debaryomyces hansenii (strain ATCC 36239 / CBS 767 / BCRC 21394 / JCM 1990 / NBRC 0083 / IGC 2968) (Yeast)).